The sequence spans 212 residues: Transcriptional repressor CcpN (212 aa).

Positions 6–70 constitute an HTH deoR-type domain; the sequence is LNKRQEHILQ…FYTGKTGTQL (65 aa). The segment at residues 23–42 is a DNA-binding region (H-T-H motif); it reads ITGEHIAEKLNLTRATLRPD. CBS domains follow at residues 83 to 139 and 148 to 211; these read FQSI…QQEL and MTRM…ENEI.

Its function is as follows. Transcription repressor that binds to the promoter of gapB and pckA genes, preventing their expression. Acts as a regulator for catabolite repression of gluconeogenic genes. The chain is Transcriptional repressor CcpN (ccpN) from Bacillus subtilis (strain 168).